The chain runs to 72 residues: Translation initiation factor IF-1 (72 aa).

One can recognise an S1-like domain in the interval 1 to 72; it reads MAKEDSIEMQ…SKGRIVFRSR (72 aa).

It belongs to the IF-1 family. As to quaternary structure, component of the 30S ribosomal translation pre-initiation complex which assembles on the 30S ribosome in the order IF-2 and IF-3, IF-1 and N-formylmethionyl-tRNA(fMet); mRNA recruitment can occur at any time during PIC assembly.

The protein localises to the cytoplasm. One of the essential components for the initiation of protein synthesis. Stabilizes the binding of IF-2 and IF-3 on the 30S subunit to which N-formylmethionyl-tRNA(fMet) subsequently binds. Helps modulate mRNA selection, yielding the 30S pre-initiation complex (PIC). Upon addition of the 50S ribosomal subunit IF-1, IF-2 and IF-3 are released leaving the mature 70S translation initiation complex. The chain is Translation initiation factor IF-1 from Aeromonas hydrophila subsp. hydrophila (strain ATCC 7966 / DSM 30187 / BCRC 13018 / CCUG 14551 / JCM 1027 / KCTC 2358 / NCIMB 9240 / NCTC 8049).